The sequence spans 335 residues: uncharacterized protein (335 aa).

4 helical membrane-spanning segments follow: residues 104-124 (FKKV…MGLL), 128-148 (LLQG…LSLF), 280-300 (LAFG…TMIG), and 310-330 (TINL…GIFV).

The protein localises to the cell membrane. This is an uncharacterized protein from Methanocaldococcus jannaschii (strain ATCC 43067 / DSM 2661 / JAL-1 / JCM 10045 / NBRC 100440) (Methanococcus jannaschii).